The following is a 228-amino-acid chain: Phosphatidylserine decarboxylase proenzyme (228 aa).

Ser197 (schiff-base intermediate with substrate; via pyruvic acid) is an active-site residue. Ser197 carries the post-translational modification Pyruvic acid (Ser); by autocatalysis.

Belongs to the phosphatidylserine decarboxylase family. PSD-A subfamily. Heterodimer of a large membrane-associated beta subunit and a small pyruvoyl-containing alpha subunit. It depends on pyruvate as a cofactor. In terms of processing, is synthesized initially as an inactive proenzyme. Formation of the active enzyme involves a self-maturation process in which the active site pyruvoyl group is generated from an internal serine residue via an autocatalytic post-translational modification. Two non-identical subunits are generated from the proenzyme in this reaction, and the pyruvate is formed at the N-terminus of the alpha chain, which is derived from the carboxyl end of the proenzyme. The post-translation cleavage follows an unusual pathway, termed non-hydrolytic serinolysis, in which the side chain hydroxyl group of the serine supplies its oxygen atom to form the C-terminus of the beta chain, while the remainder of the serine residue undergoes an oxidative deamination to produce ammonia and the pyruvoyl prosthetic group on the alpha chain.

Its subcellular location is the cell membrane. The catalysed reaction is a 1,2-diacyl-sn-glycero-3-phospho-L-serine + H(+) = a 1,2-diacyl-sn-glycero-3-phosphoethanolamine + CO2. The protein operates within phospholipid metabolism; phosphatidylethanolamine biosynthesis; phosphatidylethanolamine from CDP-diacylglycerol: step 2/2. Its function is as follows. Catalyzes the formation of phosphatidylethanolamine (PtdEtn) from phosphatidylserine (PtdSer). This Bacteroides thetaiotaomicron (strain ATCC 29148 / DSM 2079 / JCM 5827 / CCUG 10774 / NCTC 10582 / VPI-5482 / E50) protein is Phosphatidylserine decarboxylase proenzyme.